Reading from the N-terminus, the 96-residue chain is MRHYEIMVILDSSLEERTVAPSLDTYLNVIRTAGGSVEKTDVWGRRRLAYEIDKKTEGIYAVIDLQATPAAVAELDRQLRLNESVLRTKVIRPEVR.

It belongs to the bacterial ribosomal protein bS6 family.

Functionally, binds together with bS18 to 16S ribosomal RNA. The protein is Small ribosomal subunit protein bS6 of Salinispora tropica (strain ATCC BAA-916 / DSM 44818 / JCM 13857 / NBRC 105044 / CNB-440).